The primary structure comprises 347 residues: Zinc finger protein CONSTANS-LIKE 2 (347 aa).

Residues Cys16, Cys19, Cys39, His44, Cys59, Cys62, Cys82, and His87 each contribute to the Zn(2+) site. The B box-type 1; atypical zinc finger occupies 16–58; it reads CDTCRSAACTVYCEADSAYLCTTCDARVHAANRVASRHERVRV. The B box-type 2; atypical zinc-finger motif lies at 59 to 101; that stretch reads CQSCESAPAAFLCKADAASLCTACDAEIHSANPLARRHQRVPI. Residues 278–320 enclose the CCT domain; the sequence is REARVLRYREKKKTRKFDKTIRYASRKAYAEIRPRIKGRFAKR.

Belongs to the CONSTANS family. Highly expressed in leaves. Expressed at lower levels in stems, flowers and siliques. Not detected in roots.

Its subcellular location is the nucleus. In terms of biological role, putative transcription factor. Does not affect flowering time. This is Zinc finger protein CONSTANS-LIKE 2 (COL2) from Arabidopsis thaliana (Mouse-ear cress).